A 1106-amino-acid polypeptide reads, in one-letter code: Putative pre-mRNA-splicing factor ATP-dependent RNA helicase DHX16 (1106 aa).

3 disordered regions span residues 73-100 (KIQN…DKEK), 120-286 (DDIV…TKSR), and 366-394 (YIND…WEQN). Residues 78–94 (TSSSSSSSSTSLSSSSS) show a composition bias toward low complexity. Residues 138 to 155 (KRKKKEKKKEKKDKKDKK) show a composition bias toward basic residues. A compositionally biased stretch (basic and acidic residues) spans 156–167 (DKKSSTRKKSDN). Low complexity predominate over residues 189–201 (NNENNDNNNDNNN). The segment covering 232 to 283 (REQREVKELSDRIKKRDEKSTKKKIVDDSETKESIERKNRLEQNEQLETERT) has biased composition (basic and acidic residues). Residues 477–640 (IDAVREYQVL…FDGAPTFNIP (164 aa)) form the Helicase ATP-binding domain. Residue 490–497 (GETGSGKT) coordinates ATP. The short motif at 587–590 (DEAH) is the DEAH box element. One can recognise a Helicase C-terminal domain in the interval 665 to 838 (TVLQIHITEP…NVVLLLKSMG (174 aa)).

It belongs to the DEAD box helicase family. DEAH subfamily. DDX16/PRP8 sub-subfamily. In terms of assembly, component of pre-catalytic spliceosome complexes.

It localises to the nucleus. The protein resides in the nucleoplasm. It catalyses the reaction ATP + H2O = ADP + phosphate + H(+). Required for pre-mRNA splicing as component of the spliceosome. Contributes to pre-mRNA splicing after spliceosome formation and prior to the first transesterification reaction. This chain is Putative pre-mRNA-splicing factor ATP-dependent RNA helicase DHX16 (dhx16), found in Dictyostelium discoideum (Social amoeba).